The sequence spans 345 residues: DNA N(6)-methyladenine demethylase ALKBH1A (345 aa).

Substrate contacts are provided by residues Trp179 and 186–188; that span reads FDW. One can recognise a Fe2OG dioxygenase domain in the interval 225 to 345; that stretch reads RPEGAIVNYF…RININIRQVF (121 aa). 232 to 234 is a binding site for 2-oxoglutarate; it reads NYF. His243, Asp245, and His299 together coordinate Fe cation. 2-oxoglutarate is bound at residue 336–342; it reads RININIR.

This sequence belongs to the alkB family. The cofactor is Fe(2+). As to expression, mostly expressed in siliques, to a lower extent in roots, seedlings and rosette leaves, but barely in cauline leaves, stems and flowers.

The protein resides in the nucleus. Its subcellular location is the cytoplasm. The enzyme catalyses an N(6)-methyl-2'-deoxyadenosine in DNA + 2-oxoglutarate + O2 = a 2'-deoxyadenosine in DNA + formaldehyde + succinate + CO2. In terms of biological role, dioxygenase that catalyzes DNA N(6)-methyladenine (6 mA) demethylation to modulate gene expression and regulate seed germination. This chain is DNA N(6)-methyladenine demethylase ALKBH1A, found in Arabidopsis thaliana (Mouse-ear cress).